A 429-amino-acid polypeptide reads, in one-letter code: Tryptophan synthase beta chain 2 (429 aa).

Residue Lys111 is modified to N6-(pyridoxal phosphate)lysine.

The protein belongs to the TrpB family. In terms of assembly, tetramer of two alpha and two beta chains. Pyridoxal 5'-phosphate serves as cofactor.

The catalysed reaction is (1S,2R)-1-C-(indol-3-yl)glycerol 3-phosphate + L-serine = D-glyceraldehyde 3-phosphate + L-tryptophan + H2O. It functions in the pathway amino-acid biosynthesis; L-tryptophan biosynthesis; L-tryptophan from chorismate: step 5/5. Functionally, the beta subunit is responsible for the synthesis of L-tryptophan from indole and L-serine. The chain is Tryptophan synthase beta chain 2 (trpB2) from Saccharolobus solfataricus (strain ATCC 35092 / DSM 1617 / JCM 11322 / P2) (Sulfolobus solfataricus).